Consider the following 467-residue polypeptide: L-seryl-tRNA(Sec) selenium transferase (467 aa).

Position 298 is an N6-(pyridoxal phosphate)lysine (Lys298).

Belongs to the SelA family. Requires pyridoxal 5'-phosphate as cofactor.

The protein resides in the cytoplasm. The enzyme catalyses L-seryl-tRNA(Sec) + selenophosphate + H(+) = L-selenocysteinyl-tRNA(Sec) + phosphate. It participates in aminoacyl-tRNA biosynthesis; selenocysteinyl-tRNA(Sec) biosynthesis; selenocysteinyl-tRNA(Sec) from L-seryl-tRNA(Sec) (bacterial route): step 1/1. Converts seryl-tRNA(Sec) to selenocysteinyl-tRNA(Sec) required for selenoprotein biosynthesis. The protein is L-seryl-tRNA(Sec) selenium transferase of Alkaliphilus oremlandii (strain OhILAs) (Clostridium oremlandii (strain OhILAs)).